Here is a 42-residue protein sequence, read N- to C-terminus: uncharacterized protein (42 aa).

This is an uncharacterized protein from Dictyostelium discoideum (Social amoeba).